A 471-amino-acid polypeptide reads, in one-letter code: MSKKYDAGVKEYRDTYWTPDYVPLDTDLLACFKCTGQEGVPKEEVAAAVAAESSTGTWSTVWSELLTDLDFYKGRCYRIEDVPGDKESFYAFIAYPLDLFEEGSITNVLTSLVGNVFGFKALRHLRLEDIRFPMAFIKSCYGPPNGIQVERDRMNKYGRPLLGCTIKPKLGLSGKNYGRVVYECLRGGLDFTKDDENINSQPFQRWQNRFEFVAEAIKLSEQETGERKGHYLNVTANTPEEMYERAEFAKELGMPIIMHDFITGGFTANTGLSKWCRKNGMLLHIHRAMHAVIDRHPKHGIHFRVLAKCLRLSGGDQLHTGTVVGKLEGDRQTTLGYIDQLRESFVPEDRSRGNFFDQDWGSMPGVFAVASGGIHVWHMPALVTIFGDDSVLQFGGGTHGHPWGSAAGAAANRVALEACVKARNAGRHLEKESRDILTEAAKHSPELAIALETWKEIKFEFDTVDKLDVQN.

2 residues coordinate substrate: N115 and T165. K167 (proton acceptor) is an active-site residue. Residue K169 participates in substrate binding. The Mg(2+) site is built by K193, D195, and E196. The residue at position 193 (K193) is an N6-carboxylysine. The Proton acceptor role is filled by H286. Residues R287, H319, and S371 each contribute to the substrate site.

The protein belongs to the RuBisCO large chain family. Type I subfamily. Heterohexadecamer of 8 large chains and 8 small chains. Mg(2+) serves as cofactor.

It localises to the carboxysome. The catalysed reaction is 2 (2R)-3-phosphoglycerate + 2 H(+) = D-ribulose 1,5-bisphosphate + CO2 + H2O. It carries out the reaction D-ribulose 1,5-bisphosphate + O2 = 2-phosphoglycolate + (2R)-3-phosphoglycerate + 2 H(+). Functionally, ruBisCO catalyzes two reactions: the carboxylation of D-ribulose 1,5-bisphosphate, the primary event in carbon dioxide fixation, as well as the oxidative fragmentation of the pentose substrate in the photorespiration process. Both reactions occur simultaneously and in competition at the same active site. The polypeptide is Ribulose bisphosphate carboxylase large chain (Synechococcus sp. (strain CC9605)).